The chain runs to 334 residues: DNA-directed RNA polymerase subunit alpha (334 aa).

The alpha N-terminal domain (alpha-NTD) stretch occupies residues 1 to 232 (MIREKLKVST…DLFIPFLHAE (232 aa)). Residues 267–334 (QKEITLKSIF…NILQIENHFV (68 aa)) are alpha C-terminal domain (alpha-CTD).

This sequence belongs to the RNA polymerase alpha chain family. In plastids the minimal PEP RNA polymerase catalytic core is composed of four subunits: alpha, beta, beta', and beta''. When a (nuclear-encoded) sigma factor is associated with the core the holoenzyme is formed, which can initiate transcription.

It is found in the plastid. Its subcellular location is the chloroplast. The enzyme catalyses RNA(n) + a ribonucleoside 5'-triphosphate = RNA(n+1) + diphosphate. Functionally, DNA-dependent RNA polymerase catalyzes the transcription of DNA into RNA using the four ribonucleoside triphosphates as substrates. The polypeptide is DNA-directed RNA polymerase subunit alpha (Pisum sativum (Garden pea)).